Here is a 628-residue protein sequence, read N- to C-terminus: 3-hydroxy-3-methylglutaryl-coenzyme A reductase 2 (628 aa).

2 helical membrane-spanning segments follow: residues 38-58 (PLYLTNAVFFTLFFTVVYFLL) and 78-98 (EIVAIFAFVASLIYLLGFFGI). The interval 99–212 (DFVQSLIIRP…HEKTVIVTTE (114 aa)) is linker. The N-linked (GlcNAc...) asparagine glycan is linked to Asn-153. Residues 213 to 628 (EDEEIIKSVV…SSKDMSNLSS (416 aa)) form a catalytic region. The Charge relay system role is filled by Glu-307. The N-linked (GlcNAc...) asparagine glycan is linked to Asn-371. Lys-439 serves as the catalytic Charge relay system. The N-linked (GlcNAc...) asparagine glycan is linked to Asn-484. Asp-515 functions as the Charge relay system in the catalytic mechanism. His-613 functions as the Proton donor in the catalytic mechanism. N-linked (GlcNAc...) asparagine glycosylation is found at Asn-617 and Asn-625.

It belongs to the HMG-CoA reductase family.

The protein resides in the endoplasmic reticulum membrane. Its subcellular location is the mitochondrion membrane. It localises to the plastid membrane. It catalyses the reaction (R)-mevalonate + 2 NADP(+) + CoA = (3S)-3-hydroxy-3-methylglutaryl-CoA + 2 NADPH + 2 H(+). Its pathway is metabolic intermediate biosynthesis; (R)-mevalonate biosynthesis; (R)-mevalonate from acetyl-CoA: step 3/3. Catalyzes the synthesis of mevalonate. The specific precursor of all isoprenoid compounds present in plants. This chain is 3-hydroxy-3-methylglutaryl-coenzyme A reductase 2 (HMG2), found in Gossypium hirsutum (Upland cotton).